Here is a 354-residue protein sequence, read N- to C-terminus: uncharacterized protein (354 aa).

The N-terminal stretch at 1-21 is a signal peptide; that stretch reads MRYLLIVITFFMGFSSLPAWA.

It to E.coli YbgO.

Its function is as follows. May be involved in a fimbrial system chaperoned by YqiH and exported by YqiG. This is an uncharacterized protein from Escherichia coli (strain K12).